The chain runs to 643 residues: Transmembrane 9 superfamily member 4 (643 aa).

The N-terminal stretch at methionine 1–threonine 23 is a signal peptide. The Extracellular portion of the chain corresponds to phenylalanine 24–phenylalanine 282. The helical transmembrane segment at serine 283 to isoleucine 303 threads the bilayer. Residues arginine 304–serine 347 lie on the Cytoplasmic side of the membrane. At tyrosine 313 the chain carries Phosphotyrosine. Residues leucine 348 to leucine 368 form a helical membrane-spanning segment. The Extracellular segment spans residues glycine 369–glycine 377. A helical transmembrane segment spans residues alanine 378–alanine 398. Topologically, residues glycine 399–threonine 417 are cytoplasmic. Residues alanine 418 to glycine 438 traverse the membrane as a helical segment. At lysine 439–methionine 450 the chain is on the extracellular side. Residues valine 451–phenylalanine 471 traverse the membrane as a helical segment. The Cytoplasmic portion of the chain corresponds to glycine 472–valine 502. A helical transmembrane segment spans residues glycine 503–phenylalanine 523. Over serine 524–glycine 536 the chain is Extracellular. The helical transmembrane segment at phenylalanine 537–valine 557 threads the bilayer. Residues tyrosine 558–arginine 571 lie on the Cytoplasmic side of the membrane. The chain crosses the membrane as a helical span at residues asparagine 572–valine 592. Residues asparagine 593–glutamate 599 are Extracellular-facing. Residues phenylalanine 600–leucine 620 traverse the membrane as a helical segment. Topologically, residues threonine 621–aspartate 643 are cytoplasmic.

Belongs to the nonaspanin (TM9SF) (TC 9.A.2) family.

It is found in the membrane. The protein resides in the golgi apparatus. The protein localises to the early endosome. In terms of biological role, associates with proteins harboring glycine-rich transmembrane domains and ensures their efficient localization to the cell surface. This chain is Transmembrane 9 superfamily member 4 (Tm9sf4), found in Mus musculus (Mouse).